A 606-amino-acid polypeptide reads, in one-letter code: Elongation factor 4 (606 aa).

Positions 10–192 (ENIRNFSIIA…AIVQQLPAPK (183 aa)) constitute a tr-type G domain. Residues 22–27 (DHGKST) and 139–142 (NKID) each bind GTP.

The protein belongs to the TRAFAC class translation factor GTPase superfamily. Classic translation factor GTPase family. LepA subfamily.

The protein resides in the cell membrane. The catalysed reaction is GTP + H2O = GDP + phosphate + H(+). In terms of biological role, required for accurate and efficient protein synthesis under certain stress conditions. May act as a fidelity factor of the translation reaction, by catalyzing a one-codon backward translocation of tRNAs on improperly translocated ribosomes. Back-translocation proceeds from a post-translocation (POST) complex to a pre-translocation (PRE) complex, thus giving elongation factor G a second chance to translocate the tRNAs correctly. Binds to ribosomes in a GTP-dependent manner. This Lawsonia intracellularis (strain PHE/MN1-00) protein is Elongation factor 4.